Reading from the N-terminus, the 1002-residue chain is Chitin synthase II (1002 aa).

Disordered regions lie at residues 1-165 and 178-209; these read MDRP…GRTS and LDGSDDVFGPETDLSDSRPLPTHRDSFMSGSQ. The segment covering 63–78 has biased composition (low complexity); it reads SYQPSVVSSHSRSASV. Asparagine 123 carries N-linked (GlcNAc...) asparagine glycosylation. Residue asparagine 336 is glycosylated (N-linked (GlcNAc...) asparagine). 8 helical membrane-spanning segments follow: residues 627–647, 669–689, 704–724, 740–760, 780–800, 808–828, 906–926, and 940–960; these read WLNGAFFAAVYSLVQFRQILA, LLFTYFSLANFYLTFYFVAGG, SVIFTILRYTCVLLIATQFIL, SMIIYGVIMTYTSFACIYIVV, LIVSMASTIGLYFVMSFLYLE, SLQYFLLLPSYICTLQVYAFC, YMVVTWMIANGILAMAVSEIY, and ILWAVASLAIFRALGSTTFAI.

The protein belongs to the chitin synthase family. Class II subfamily. Expressed in hyphal bodies.

Its subcellular location is the cell membrane. The catalysed reaction is [(1-&gt;4)-N-acetyl-beta-D-glucosaminyl](n) + UDP-N-acetyl-alpha-D-glucosamine = [(1-&gt;4)-N-acetyl-beta-D-glucosaminyl](n+1) + UDP + H(+). Its function is as follows. Polymerizes chitin, a structural polymer of the cell wall and septum, by transferring the sugar moiety of UDP-GlcNAc to the non-reducing end of the growing chitin polymer. Contributes to the production of conidia and the ability of fungal conidia to germinate. Involved in fungal stress tolerances. The sequence is that of Chitin synthase II from Metarhizium acridum (strain CQMa 102).